The chain runs to 306 residues: Transcription initiation factor IIB (306 aa).

Repeat copies occupy residues 122 to 205 (NELE…LREL) and 216 to 297 (DYVT…ELTQ).

The protein belongs to the TFIIB family.

Its function is as follows. Stabilizes TBP binding to an archaeal box-A promoter. Also responsible for recruiting RNA polymerase II to the pre-initiation complex (DNA-TBP-TFIIB). The chain is Transcription initiation factor IIB from Saccharolobus shibatae (strain ATCC 51178 / DSM 5389 / JCM 8931 / NBRC 15437 / B12) (Sulfolobus shibatae).